A 574-amino-acid chain; its full sequence is Acetolactate synthase isozyme 3 large subunit (574 aa).

Glutamate 51 is a thiamine diphosphate binding site. FAD contacts are provided by residues arginine 153, 261–282, and 304–323; these read HGTY…VGVR and DIDP…IVGD. Positions 397–477 are thiamine pyrophosphate binding; sequence QHQMFAALYY…VLVVNLNNRY (81 aa). The Mg(2+) site is built by aspartate 448 and asparagine 475.

The protein belongs to the TPP enzyme family. In terms of assembly, dimer of large and small chains. It depends on Mg(2+) as a cofactor. Thiamine diphosphate serves as cofactor.

The enzyme catalyses 2 pyruvate + H(+) = (2S)-2-acetolactate + CO2. The protein operates within amino-acid biosynthesis; L-isoleucine biosynthesis; L-isoleucine from 2-oxobutanoate: step 1/4. It participates in amino-acid biosynthesis; L-valine biosynthesis; L-valine from pyruvate: step 1/4. With respect to regulation, sensitive to valine inhibition. The sequence is that of Acetolactate synthase isozyme 3 large subunit (ilvI) from Escherichia coli (strain K12).